Here is a 668-residue protein sequence, read N- to C-terminus: Echinocandin B biosynthetic cluster protein J (668 aa).

Disordered regions lie at residues 1–20, 92–113, 224–322, 330–349, and 483–506; these read MHFAESVQTPPPSRPSDQSL, YTPPSLDSRSSATPPQNLPPTP, PLDH…QSAD, EVAEPAPPSPSTRWTHSIPT, and NCSSSSCSSSASKKNEEKREPPLK. Positions 96–106 are enriched in polar residues; sequence SLDSRSSATPP. A compositionally biased stretch (pro residues) spans 264-275; it reads NPEPGTPTPPSP. Residues 311 to 322 are compositionally biased toward polar residues; the sequence is YRSTPSPCQSAD. The span at 484-494 shows a compositional bias: low complexity; that stretch reads CSSSSCSSSAS. Residues 495 to 505 are compositionally biased toward basic and acidic residues; sequence KKNEEKREPPL.

It participates in antifungal biosynthesis. Its function is as follows. Part of the gene cluster that mediates the biosynthesis of echinocandin B, a fungal lipidated cyclic hexapeptide that acts as an antifungal agent. Linoleoyl-AMP, produced by the fatty-acyl-AMP ligase ecdI, is transferred to the initiation carrier domain (T0) of ecdA. The linoleoyl-S-phosphopantetheinyl-T0 is sequentially extended with L-ornithine, L-threonine, L-proline, L-homotyrosine, L-threonine, and 4R-methyl-L-proline to form the linear hexapeptide. Thereafter, the terminal condensation (C7) performs macrocyclization of the NRPS product and the cyclic scaffold is released from ecdA. All six of the amino acid residues are hydroxylated, including 4R,5R-dihydroxy-L-ornithine, 4R-hydroxyl-L-proline, 3S,4S-dihydroxy-L-homotyrosine, and 3S-hydroxyl-4S-methyl-L-prolin. In the pathway, all the hydroxylation reactions are proposed to occur following completion of the cyclic peptide, so the unhydroxylated precursor produced by ecdA will undergo six rounds of hydroxylation. Five hydroxylase genes (ecdG, ecdH, ecdK, htyE and htyF) are embedded within the echinocandin B (ecd) and L-homotyrosine (hty) clusters. The polypeptide is Echinocandin B biosynthetic cluster protein J (Aspergillus rugulosus (Emericella rugulosa)).